Consider the following 328-residue polypeptide: Coiled-coil domain-containing protein 54 (328 aa).

Residues 122 to 151 (TTKDILSMKEDIKALKKKVTELEKQNSYSR) are a coiled coil. At Thr-182 the chain carries Phosphothreonine. Over residues 186–197 (TDREMSSAEPEK) the composition is skewed to basic and acidic residues. The tract at residues 186–205 (TDREMSSAEPEKVPSYPKST) is disordered.

The protein is Coiled-coil domain-containing protein 54 (CCDC54) of Macaca fascicularis (Crab-eating macaque).